A 618-amino-acid chain; its full sequence is Tyrosine-protein kinase ZAP-70 (618 aa).

Residues 10-102 (FFYGSISRAE…GLPCNLRKPC (93 aa)) form the SH2 1 domain. Residues 103 to 162 (NRPPGLEPQPGVFDCLRDAMVRDYVRQTWKLEGDALEQAIISQAPQVEKLIATTAHERMP) are interdomain A. The SH2 2 domain occupies 163–254 (WYHSSLTREE…GLIYRLKEVC (92 aa)). Tyr-248 bears the Phosphotyrosine mark. An interdomain B region spans residues 255 to 336 (PNSSASAAVA…KKLFLKRENL (82 aa)). A disordered region spans residues 270–320 (AHPSTFTQPQRRVDTLNSDGYTPEPARLASSTDKPRPMPMDTSVYESPYSD). The span at 273 to 289 (STFTQPQRRVDTLNSDG) shows a compositional bias: polar residues. Ser-287 is modified (phosphoserine). Tyr-290 bears the Phosphotyrosine mark. Tyr-314 is subject to Phosphotyrosine; by LCK. Tyr-318 carries the phosphotyrosine modification. Residues 337-597 (LVADIELGCG…VEQRMRNYYY (261 aa)) enclose the Protein kinase domain. ATP is bound by residues 343 to 351 (LGCGNFGSV) and Lys-368. Asp-460 acts as the Proton acceptor in catalysis. Residues Tyr-491 and Tyr-492 each carry the phosphotyrosine modification. Residue Lys-543 forms a Glycyl lysine isopeptide (Lys-Gly) (interchain with G-Cter in ubiquitin) linkage.

The protein belongs to the protein kinase superfamily. Tyr protein kinase family. SYK/ZAP-70 subfamily. Interacts with CD247/CD3Z; this interaction docks ZAP70 at the stimulated TCR. Interacts with NFAM1. Interacts with adapter protein SLA; this interaction negatively regulates T-cell receptor signaling. Interacts with VAV1. Interacts with CBL; this interaction promotes ubiquitination, internalization and subsequent degradation of CD247/CD3Z. Identified in a complex with CBL and UBE2L3. Interacts with SHB. Interacts with adapter protein SLA2; this interaction negatively regulates T-cell receptor signaling. Interacts with CBLB. Interacts (via SH2 domains) with RHOH; this interaction regulates ZAP70 subcellular localization. Interacts with DEF6. Interacts (ubiquitinated form) with OTUD7B and UBASH3B. Phosphorylated on tyrosine residues upon T-cell antigen receptor (TCR) stimulation. Phosphorylation of Tyr-314 and Tyr-314 are essential for ZAP70 positive function on T-lymphocyte activation whereas Tyr-290 has a negative regulatory role. Within the C-terminal kinase domain, Tyr-491 and Tyr-492 are phosphorylated after TCR induction, Tyr-491 playing a negative regulatory role and Tyr-492 a positive. Tyr-492 is dephosphorylated by PTN22. In terms of processing, ubiquitinated in response to T cell activation. Deubiquitinated by OTUD7B. As to expression, isoform 1 and isoform 2 are expressed in thymus, spleen and lymph nodes.

Its subcellular location is the cytoplasm. It is found in the cell membrane. It catalyses the reaction L-tyrosyl-[protein] + ATP = O-phospho-L-tyrosyl-[protein] + ADP + H(+). Its activity is regulated as follows. Activated by phosphorylation at Tyr-492 in the activation loop. Tyrosine kinase that plays an essential role in regulation of the adaptive immune response. Regulates motility, adhesion and cytokine expression of mature T-cells, as well as thymocyte development. Also contributes to the development and activation of primary B-lymphocytes. When antigen presenting cells (APC) activate T-cell receptor (TCR), a serie of phosphorylations lead to the recruitment of ZAP70 to the doubly phosphorylated TCR component CD3Z through ITAM motif at the plasma membrane. This recruitment serves to localization to the stimulated TCR and to relieve its autoinhibited conformation. Release of ZAP70 active conformation is further stabilized by phosphorylation mediated by LCK. Subsequently, ZAP70 phosphorylates at least 2 essential adapter proteins: LAT and LCP2. In turn, a large number of signaling molecules are recruited and ultimately lead to lymphokine production, T-cell proliferation and differentiation. Furthermore, ZAP70 controls cytoskeleton modifications, adhesion and mobility of T-lymphocytes, thus ensuring correct delivery of effectors to the APC. ZAP70 is also required for TCR-CD3Z internalization and degradation through interaction with the E3 ubiquitin-protein ligase CBL and adapter proteins SLA and SLA2. Thus, ZAP70 regulates both T-cell activation switch on and switch off by modulating TCR expression at the T-cell surface. During thymocyte development, ZAP70 promotes survival and cell-cycle progression of developing thymocytes before positive selection (when cells are still CD4/CD8 double negative). Additionally, ZAP70-dependent signaling pathway may also contribute to primary B-cells formation and activation through B-cell receptor (BCR). This chain is Tyrosine-protein kinase ZAP-70 (Zap70), found in Mus musculus (Mouse).